Consider the following 278-residue polypeptide: Ribosomal RNA small subunit methyltransferase A (278 aa).

S-adenosyl-L-methionine contacts are provided by Asn-28, Leu-30, Gly-55, Glu-77, Asp-103, and Asn-122.

This sequence belongs to the class I-like SAM-binding methyltransferase superfamily. rRNA adenine N(6)-methyltransferase family. RsmA subfamily.

The protein localises to the cytoplasm. It carries out the reaction adenosine(1518)/adenosine(1519) in 16S rRNA + 4 S-adenosyl-L-methionine = N(6)-dimethyladenosine(1518)/N(6)-dimethyladenosine(1519) in 16S rRNA + 4 S-adenosyl-L-homocysteine + 4 H(+). In terms of biological role, specifically dimethylates two adjacent adenosines (A1518 and A1519) in the loop of a conserved hairpin near the 3'-end of 16S rRNA in the 30S particle. May play a critical role in biogenesis of 30S subunits. The protein is Ribosomal RNA small subunit methyltransferase A of Cereibacter sphaeroides (strain ATCC 17023 / DSM 158 / JCM 6121 / CCUG 31486 / LMG 2827 / NBRC 12203 / NCIMB 8253 / ATH 2.4.1.) (Rhodobacter sphaeroides).